We begin with the raw amino-acid sequence, 134 residues long: Small ribosomal subunit protein uS8 (134 aa).

It belongs to the universal ribosomal protein uS8 family. In terms of assembly, part of the 30S ribosomal subunit. Contacts proteins S5 and S12.

Functionally, one of the primary rRNA binding proteins, it binds directly to 16S rRNA central domain where it helps coordinate assembly of the platform of the 30S subunit. This Thermotoga neapolitana (strain ATCC 49049 / DSM 4359 / NBRC 107923 / NS-E) protein is Small ribosomal subunit protein uS8.